The sequence spans 920 residues: Dynamin-B (920 aa).

The segment at 65-84 (NSNNNNNNNNNNKINKNNNN) is disordered. The region spanning 154-448 (EITLPQIIVV…LTKHIRDTFP (295 aa)) is the Dynamin-type G domain. The interval 164 to 171 (GSQSSGKS) is G1 motif. Position 164-172 (164-172 (GSQSSGKSS)) interacts with GTP. The interval 190–192 (VTR) is G2 motif. Positions 204–241 (TTSRNNVNENEDEDEDDNYYDNDNDDNSLEEWGEFGHT) are disordered. A compositionally biased stretch (acidic residues) spans 212–236 (ENEDEDEDDNYYDNDNDDNSLEEWG). The tract at residues 290–293 (DLPG) is G3 motif. A G4 motif region spans residues 359 to 362 (TKLD). Residues 359-365 (TKLDLMD) and 390-393 (NRSQ) each bind GTP. The segment at 389 to 392 (VNRS) is G5 motif. The tract at residues 680–790 (FQSTSSTSSS…EIQIQQQQQQ (111 aa)) is disordered. Low complexity-rich tracts occupy residues 681–705 (QSTS…NSNP) and 724–751 (QIKQ…QKQQ). The stretch at 724 to 751 (QIKQQQQQQQQQQQQSYQQQQQQQQKQQ) forms a coiled coil. Residues 765 to 774 (PPSPPSPPQP) show a composition bias toward pro residues. Positions 775-790 (KQQQSHEIQIQQQQQQ) are enriched in low complexity. Residues 825 to 916 (IYLLRRLLLA…SLSQSENSDL (92 aa)) enclose the GED domain.

The protein belongs to the TRAFAC class dynamin-like GTPase superfamily. Dynamin/Fzo/YdjA family.

It localises to the cytoplasm. In terms of biological role, enzyme hydrolyzing GTP. The polypeptide is Dynamin-B (dymB) (Dictyostelium discoideum (Social amoeba)).